A 160-amino-acid chain; its full sequence is Transcription elongation factor GreA (160 aa).

The protein belongs to the GreA/GreB family.

Functionally, necessary for efficient RNA polymerase transcription elongation past template-encoded arresting sites. The arresting sites in DNA have the property of trapping a certain fraction of elongating RNA polymerases that pass through, resulting in locked ternary complexes. Cleavage of the nascent transcript by cleavage factors such as GreA or GreB allows the resumption of elongation from the new 3'terminus. GreA releases sequences of 2 to 3 nucleotides. The polypeptide is Transcription elongation factor GreA (Leuconostoc citreum (strain KM20)).